We begin with the raw amino-acid sequence, 233 residues long: Aspartate/glutamate leucyltransferase (233 aa).

It belongs to the R-transferase family. Bpt subfamily.

The protein localises to the cytoplasm. The catalysed reaction is N-terminal L-glutamyl-[protein] + L-leucyl-tRNA(Leu) = N-terminal L-leucyl-L-glutamyl-[protein] + tRNA(Leu) + H(+). It catalyses the reaction N-terminal L-aspartyl-[protein] + L-leucyl-tRNA(Leu) = N-terminal L-leucyl-L-aspartyl-[protein] + tRNA(Leu) + H(+). In terms of biological role, functions in the N-end rule pathway of protein degradation where it conjugates Leu from its aminoacyl-tRNA to the N-termini of proteins containing an N-terminal aspartate or glutamate. This is Aspartate/glutamate leucyltransferase from Vibrio cholerae serotype O1 (strain ATCC 39315 / El Tor Inaba N16961).